We begin with the raw amino-acid sequence, 233 residues long: Large ribosomal subunit protein uL1 (233 aa).

This sequence belongs to the universal ribosomal protein uL1 family. In terms of assembly, part of the 50S ribosomal subunit.

Its function is as follows. Binds directly to 23S rRNA. The L1 stalk is quite mobile in the ribosome, and is involved in E site tRNA release. In terms of biological role, protein L1 is also a translational repressor protein, it controls the translation of the L11 operon by binding to its mRNA. The protein is Large ribosomal subunit protein uL1 of Thermotoga sp. (strain RQ2).